The chain runs to 492 residues: Mitochondrial distribution and morphology protein 12 (492 aa).

The SMP-LTD domain occupies 1–492 (MSIDLNWETV…VYPSFWTFLV (492 aa)). Disordered regions lie at residues 68-158 (DFYE…STPG), 199-301 (LEGH…GHPR), and 379-434 (AVGG…GSGN). Positions 78-90 (VASDDSEGEEDAV) are enriched in acidic residues. The span at 130 to 139 (SPGGPGGPGM) shows a compositional bias: gly residues. The segment covering 246 to 257 (LNPNSLAPPSSS) has biased composition (low complexity). A compositionally biased stretch (polar residues) spans 270–285 (TTPAPGSATALSGSNE). The span at 387-400 (GLSSPGEGPSQAQG) shows a compositional bias: low complexity. Residues 401–415 (QGQGQGQGQGQGQTP) are compositionally biased toward gly residues. Positions 416–428 (GAGQQKQQKKQAG) are enriched in low complexity.

It belongs to the MDM12 family. Component of the ER-mitochondria encounter structure (ERMES) or MDM complex, composed of MMM1, MDM10, MDM12 and MDM34. An MMM1 homodimer associates with one molecule of MDM12 on each side in a pairwise head-to-tail manner, and the SMP-LTD domains of MMM1 and MDM12 generate a continuous hydrophobic tunnel for phospholipid trafficking.

It localises to the mitochondrion outer membrane. The protein localises to the endoplasmic reticulum membrane. Its function is as follows. Component of the ERMES/MDM complex, which serves as a molecular tether to connect the endoplasmic reticulum (ER) and mitochondria. Components of this complex are involved in the control of mitochondrial shape and protein biogenesis, and function in nonvesicular lipid trafficking between the ER and mitochondria. MDM12 is required for the interaction of the ER-resident membrane protein MMM1 and the outer mitochondrial membrane-resident beta-barrel protein MDM10. The MDM12-MMM1 subcomplex functions in the major beta-barrel assembly pathway that is responsible for biogenesis of all mitochondrial outer membrane beta-barrel proteins, and acts in a late step after the SAM complex. The MDM10-MDM12-MMM1 subcomplex further acts in the TOM40-specific pathway after the action of the MDM12-MMM1 complex. Essential for establishing and maintaining the structure of mitochondria and maintenance of mtDNA nucleoids. This chain is Mitochondrial distribution and morphology protein 12, found in Chaetomium globosum (strain ATCC 6205 / CBS 148.51 / DSM 1962 / NBRC 6347 / NRRL 1970) (Soil fungus).